The chain runs to 1106 residues: MFNSMTPPPISSYGEPCCLRPLPSQGAPSVGTEGLSGPPFCHQANLMSGPHSYGPARETNSCTEGPLFSSPRSAVKLTKKRALSISPLSDASLDLQTVIRTSPSSLVAFINSRCTSPGGSYGHLSIGTMSPSLGFPAQMNHQKGPSPSFGVQPCGPHDSARGGMIPHPQSRGPFPTCQLKSELDMLVGKCREEPLEGDMSSPNSTGIQDPLLGMLDGREDLEREEKREPESVYETDCRWDGCSQEFDSQEQLVHHINSEHIHGERKEFVCHWGGCSRELRPFKAQYMLVVHMRRHTGEKPHKCTFEGCRKSYSRLENLKTHLRSHTGEKPYMCEHEGCSKAFSNASDRAKHQNRTHSNEKPYVCKLPGCTKRYTDPSSLRKHVKTVHGPDAHVTKRHRGDGPLPRAPSISTVEPKREREGGPIREESRLTVPEGAMKPQPSPGAQSSCSSDHSPAGSAANTDSGVEMTGNAGGSTEDLSSLDEGPCIAGTGLSTLRRLENLRLDQLHQLRPIGTRGLKLPSLSHTGTTVSRRVGPPVSLERRSSSSSSISSAYTVSRRSSLASPFPPGSPPENGASSLPGLMPAQHYLLRARYASARGGGTSPTAASSLDRIGGLPMPPWRSRAEYPGYNPNAGVTRRASDPAQAADRPAPARVQRFKSLGCVHTPPTVAGGGQNFDPYLPTSVYSPQPPSITENAAMDARGLQEEPEVGTSMVGSGLNPYMDFPPTDTLGYGGPEGAAAEPYGARGPGSLPLGPGPPTNYGPNPCPQQASYPDPTQETWGEFPSHSGLYPGPKALGGTYSQCPRLEHYGQVQVKPEQGCPVGSDSTGLAPCLNAHPSEGPPHPQPLFSHYPQPSPPQYLQSGPYTQPPPDYLPSEPRPCLDFDSPTHSTGQLKAQLVCNYVQSQQELLWEGGGREDAPAQEPSYQSPKFLGGSQVSPSRAKAPVNTYGPGFGPNLPNHKSGSYPTPSPCHENFVVGANRASHRAAAPPRLLPPLPTCYGPLKVGGTNPSCGHPEVGRLGGGPALYPPPEGQVCNPLDSLDLDNTQLDFVAILDEPQGLSPPPSHDQRGSSGHTPPPSGPPNMAVGNMSVLLRSLPGETEFLNSSA.

The segment at 1–20 is SNAG domain; the sequence is MFNSMTPPPISSYGEPCCLR. The segment at 120–124 is interaction with SUFU; sequence SYGHL. 5 consecutive C2H2-type zinc fingers follow at residues 235–260, 268–295, 301–325, 331–356, and 362–387; these read TDCR…NSEH, FVCH…MRRH, HKCT…LRSH, YMCE…NRTH, and YVCK…KTVH. The tract at residues 283–291 is interaction with DNA; the sequence is KAQYMLVVH. 2 interaction with DNA regions span residues 345–350 and 375–381; these read ASDRAK and DPSSLRK. 5 disordered regions span residues 375 to 485, 516 to 580, 732 to 792, 817 to 889, and 914 to 942; these read DPSS…DEGP, GLKL…SLPG, YGGP…LYPG, EQGC…PTHS, and GRED…SRAK. The span at 413–428 shows a compositional bias: basic and acidic residues; sequence EPKREREGGPIREESR. Over residues 442–463 the composition is skewed to polar residues; the sequence is PGAQSSCSSDHSPAGSAANTDS. K518 carries the post-translational modification N6-acetyllysine. 2 stretches are compositionally biased toward low complexity: residues 544–560 and 737–753; these read SSSS…RRSS and GAAA…SLPL. Positions 754–766 are enriched in pro residues; the sequence is GPGPPTNYGPNPC. The span at 768–779 shows a compositional bias: polar residues; sequence QQASYPDPTQET. Residue K1003 forms a Glycyl lysine isopeptide (Lys-Gly) (interchain with G-Cter in SUMO2) linkage. Residues 1054–1087 are disordered; it reads DEPQGLSPPPSHDQRGSSGHTPPPSGPPNMAVGN.

Belongs to the GLI C2H2-type zinc-finger protein family. As to quaternary structure, interacts with KIF7. Interacts with STK36. Interacts with ZIC1; the interaction enhances transcription activation. Interacts with SUFU; this inhibits transcriptional activation by GLI1. In terms of processing, phosphorylated in vitro by ULK3. Acetylation at Lys-518 down-regulates transcriptional activity. Deacetylated by HDAC1. Post-translationally, ubiquitinated by the CRL2(FEM1B) complex, suppressing GLI1 transcriptional activator activity. Detected in testis (at protein level). Testis, myometrium and fallopian tube. Also expressed in the brain with highest expression in the cerebellum, optic nerve and olfactory tract. Isoform 1 is detected in brain, spleen, pancreas, liver, kidney and placenta; isoform 2 is not detectable in these tissues.

Its subcellular location is the cytoplasm. It is found in the nucleus. Its function is as follows. Acts as a transcriptional activator. Binds to the DNA consensus sequence 5'-GACCACCCA-3'. Regulates the transcription of specific genes during normal development. Plays a role in craniofacial development and digital development, as well as development of the central nervous system and gastrointestinal tract. Mediates SHH signaling. Plays a role in cell proliferation and differentiation via its role in SHH signaling. Functionally, acts as a transcriptional activator, but activates a different set of genes than isoform 1. Activates expression of CD24, unlike isoform 1. Mediates SHH signaling. Promotes cancer cell migration. The chain is Zinc finger protein GLI1 (GLI1) from Homo sapiens (Human).